The chain runs to 767 residues: MSGDHLHNDSQIEADFRLNDSHKHKDKHKDREHRHKEHKKDKDKDREKSKHSNSEHKDSEKKHKEKEKTKHKDGSSEKHKDKHKDRDKERRKEEKIRAAGDAKIKKEKENGFSSPPRIKDEPEDDGYFAPPKEDIKPLKRLRDEDDADYKPKKIKTEDIKKEKKRKSEEEEDGKLKKPKNKDKDKKVAEPDNKKKKPKKEEEQKWKWWEEERYPEGIKWKFLEHKGPVFAPPYEPLPESVKFYYDGKVMKLSPKAEEVATFFAKMLDHEYTTKEIFRKNFFKDWRKEMTNDEKNTITNLSKCDFTQMSQYFKAQSEARKQMSKEEKLKIKEENEKLLKEYGFCVMDNHRERIANFKIEPPGLFRGRGNHPKMGMLKRRIMPEDIIINCSKDAKVPSPPPGHKWKEVRHDNKVTWLVSWTENIQGSIKYIMLNPSSRIKGEKDWQKYETARRLKKCVDKIRNQYREDWKSKEMKVRQRAVALYFIDKLALRAGNEKEEGETADTVGCCSLRVEHINLHPELDGQEYVVEFDFPGKDSIRYYNKVPVEKRVFKNLQLFMENKQPEDDLFDRLNTGILNKHLQDLMEGLTAKVFRTYNASITLQQQLKELTAPDENVPAKILSYNRANRAVAILCNHQRAPPKTFEKSMMNLQSKIDAKKDQLADARRDLKSAKADAKVMKDAKTKKVVESKKKAVQRLEEQLMKLEVQATDREENKQIALGTSKLNYLDPRITVAWCKKWGVPIEKIYNKTQREKFAWAIDMTDEDYEF.

The segment covering 1–23 has biased composition (basic and acidic residues); sequence MSGDHLHNDSQIEADFRLNDSHK. The interval 1–201 is disordered; the sequence is MSGDHLHNDS…NKKKKPKKEE (201 aa). Serine 2 is modified (N-acetylserine). Phosphoserine occurs at positions 2 and 10. Positions 24–39 are enriched in basic residues; that stretch reads HKDKHKDREHRHKEHK. The segment covering 40–110 has biased composition (basic and acidic residues); sequence KDKDKDREKS…DAKIKKEKEN (71 aa). Serine 59 carries the post-translational modification Phosphoserine. A Glycyl lysine isopeptide (Lys-Gly) (interchain with G-Cter in SUMO2) cross-link involves residue lysine 103. Lysine 105 is covalently cross-linked (Glycyl lysine isopeptide (Lys-Gly) (interchain with G-Cter in SUMO); alternate). A Glycyl lysine isopeptide (Lys-Gly) (interchain with G-Cter in SUMO2); alternate cross-link involves residue lysine 105. Serine 114 is subject to Phosphoserine. Residue lysine 119 forms a Glycyl lysine isopeptide (Lys-Gly) (interchain with G-Cter in SUMO); alternate linkage. Residue lysine 119 forms a Glycyl lysine isopeptide (Lys-Gly) (interchain with G-Cter in SUMO2); alternate linkage. Lysine 119 is covalently cross-linked (Glycyl lysine isopeptide (Lys-Gly) (interchain with G-Cter in SUMO1); alternate). A compositionally biased stretch (basic and acidic residues) spans 131–168; that stretch reads PKEDIKPLKRLRDEDDADYKPKKIKTEDIKKEKKRKSE. Glycyl lysine isopeptide (Lys-Gly) (interchain with G-Cter in SUMO2) cross-links involve residues lysine 136 and lysine 150. Lysine 155 is covalently cross-linked (Glycyl lysine isopeptide (Lys-Gly) (interchain with G-Cter in SUMO); alternate). Lysine 155 is covalently cross-linked (Glycyl lysine isopeptide (Lys-Gly) (interchain with G-Cter in SUMO2); alternate). Glycyl lysine isopeptide (Lys-Gly) (interchain with G-Cter in SUMO2) cross-links involve residues lysine 160 and lysine 166. Lysine 174 participates in a covalent cross-link: Glycyl lysine isopeptide (Lys-Gly) (interchain with G-Cter in SUMO2); alternate. An N6-acetyllysine; alternate modification is found at lysine 174. Positions 181-201 are enriched in basic and acidic residues; it reads KDKDKKVAEPDNKKKKPKKEE. Lysine 206 is covalently cross-linked (Glycyl lysine isopeptide (Lys-Gly) (interchain with G-Cter in SUMO2)). Lysine 282 carries the post-translational modification N6-acetyllysine. Residue lysine 338 forms a Glycyl lysine isopeptide (Lys-Gly) (interchain with G-Cter in SUMO2) linkage. Interaction with DNA regions lie at residues 427 to 428 and 490 to 495; these read KY and RAGNEK. In terms of domain architecture, Topo IB-type catalytic spans 434–767; that stretch reads SSRIKGEKDW…IDMTDEDYEF (334 aa). A Phosphoserine; by CK2 modification is found at serine 508. Lysine 551 is covalently cross-linked (Glycyl lysine isopeptide (Lys-Gly) (interchain with G-Cter in SUMO2)). Positions 587-589 are interaction with DNA; the sequence is TAK. Residues lysine 644, lysine 702, and lysine 714 each participate in a glycyl lysine isopeptide (Lys-Gly) (interchain with G-Cter in SUMO2) cross-link. Tyrosine 725 serves as the catalytic O-(3'-phospho-DNA)-tyrosine intermediate.

It belongs to the type IB topoisomerase family. As to quaternary structure, monomer. Interacts with ERCC6. Interacts with TPRN; TPRN interacts with a number of DNA damage response proteins, is recruited to sites of DNA damage and may play a role in DNA damage repair. Sumoylated. Lys-119 is the main site of sumoylation. Sumoylation plays a role in partitioning TOP1 between nucleoli and nucleoplasm. Levels are dramatically increased on camptothecin (CPT) treatment. Post-translationally, phosphorylation at Ser-508 by CK2 increases binding to supercoiled DNA and sensitivity to camptothecin.

The protein localises to the nucleus. It localises to the nucleolus. Its subcellular location is the nucleoplasm. The enzyme catalyses ATP-independent breakage of single-stranded DNA, followed by passage and rejoining.. In terms of biological role, releases the supercoiling and torsional tension of DNA introduced during the DNA replication and transcription by transiently cleaving and rejoining one strand of the DNA duplex. Introduces a single-strand break via transesterification at a target site in duplex DNA. The scissile phosphodiester is attacked by the catalytic tyrosine of the enzyme, resulting in the formation of a DNA-(3'-phosphotyrosyl)-enzyme intermediate and the expulsion of a 5'-OH DNA strand. The free DNA strand then rotates around the intact phosphodiester bond on the opposing strand, thus removing DNA supercoils. Finally, in the religation step, the DNA 5'-OH attacks the covalent intermediate to expel the active-site tyrosine and restore the DNA phosphodiester backbone. Regulates the alternative splicing of tissue factor (F3) pre-mRNA in endothelial cells. Involved in the circadian transcription of the core circadian clock component BMAL1 by altering the chromatin structure around the ROR response elements (ROREs) on the BMAL1 promoter. The protein is DNA topoisomerase 1 (Top1) of Mus musculus (Mouse).